A 433-amino-acid chain; its full sequence is Enolase (433 aa).

Position 167 (glutamine 167) interacts with (2R)-2-phosphoglycerate. Glutamate 209 (proton donor) is an active-site residue. Residues aspartate 246, glutamate 291, and aspartate 318 each contribute to the Mg(2+) site. (2R)-2-phosphoglycerate is bound by residues lysine 343, arginine 372, serine 373, and lysine 394. The active-site Proton acceptor is lysine 343.

Belongs to the enolase family. Component of the RNA degradosome, a multiprotein complex involved in RNA processing and mRNA degradation. It depends on Mg(2+) as a cofactor.

The protein resides in the cytoplasm. The protein localises to the secreted. Its subcellular location is the cell surface. The enzyme catalyses (2R)-2-phosphoglycerate = phosphoenolpyruvate + H2O. The protein operates within carbohydrate degradation; glycolysis; pyruvate from D-glyceraldehyde 3-phosphate: step 4/5. In terms of biological role, catalyzes the reversible conversion of 2-phosphoglycerate (2-PG) into phosphoenolpyruvate (PEP). It is essential for the degradation of carbohydrates via glycolysis. This is Enolase from Edwardsiella ictaluri (strain 93-146).